The sequence spans 317 residues: Transaldolase (317 aa).

The Schiff-base intermediate with substrate role is filled by Lys131.

This sequence belongs to the transaldolase family. Type 1 subfamily. Homodimer.

The protein resides in the cytoplasm. It catalyses the reaction D-sedoheptulose 7-phosphate + D-glyceraldehyde 3-phosphate = D-erythrose 4-phosphate + beta-D-fructose 6-phosphate. It functions in the pathway carbohydrate degradation; pentose phosphate pathway; D-glyceraldehyde 3-phosphate and beta-D-fructose 6-phosphate from D-ribose 5-phosphate and D-xylulose 5-phosphate (non-oxidative stage): step 2/3. Its function is as follows. Transaldolase is important for the balance of metabolites in the pentose-phosphate pathway. The chain is Transaldolase from Baumannia cicadellinicola subsp. Homalodisca coagulata.